A 708-amino-acid polypeptide reads, in one-letter code: Nicastrin (708 aa).

The N-terminal stretch at methionine 1–serine 34 is a signal peptide. At valine 35–glutamate 668 the chain is on the lumenal side. 3 N-linked (GlcNAc...) asparagine glycosylation sites follow: asparagine 44, asparagine 54, and asparagine 128. Residues cysteine 49 and cysteine 61 are joined by a disulfide bond. A disulfide bridge links cysteine 139 with cysteine 158. N-linked (GlcNAc...) asparagine glycosylation is found at asparagine 186 and asparagine 203. Intrachain disulfides connect cysteine 194-cysteine 212 and cysteine 229-cysteine 247. 11 N-linked (GlcNAc...) asparagine glycosylation sites follow: asparagine 263, asparagine 386, asparagine 434, asparagine 463, asparagine 507, asparagine 529, asparagine 561, asparagine 572, asparagine 579, asparagine 593, and asparagine 611. Cysteine 585 and cysteine 619 are oxidised to a cystine. The helical transmembrane segment at phenylalanine 669–isoleucine 689 threads the bilayer. Residues asparagine 690–tyrosine 708 lie on the Cytoplasmic side of the membrane.

Belongs to the nicastrin family. Component of the gamma-secretase complex. The functional gamma-secretase complex is composed of at least four polypeptides: a presenilin homodimer (PSEN1 or PSEN2), nicastrin (NCSTN), APH1 (APH1A or APH1B) and PEN2. Binds to proteolytic processed C-terminal fragments C83 and C99 of the amyloid precursor protein (APP). Interacts with PSEN1 and PSEN2. In terms of processing, N-glycosylated.

The protein resides in the membrane. It is found in the cytoplasmic vesicle membrane. The protein localises to the melanosome. In terms of biological role, essential subunit of the gamma-secretase complex, an endoprotease complex that catalyzes the intramembrane cleavage of integral membrane proteins such as Notch receptors and APP (amyloid-beta precursor protein). The gamma-secretase complex plays a role in Notch and Wnt signaling cascades and regulation of downstream processes via its role in processing key regulatory proteins, and by regulating cytosolic CTNNB1 levels. In Rattus norvegicus (Rat), this protein is Nicastrin (Ncstn).